A 312-amino-acid chain; its full sequence is Serine acetyltransferase 5 (312 aa).

The segment covering 1–17 has biased composition (basic and acidic residues); the sequence is MPPAGELRHQSPSKEKL. The interval 1–25 is disordered; the sequence is MPPAGELRHQSPSKEKLSSVTQSDE.

This sequence belongs to the transferase hexapeptide repeat family. Homomultimer. In terms of tissue distribution, mostly expressed in stems, flowers and siliques. Localized in vascular tissues, particularly in phloem.

It localises to the cytoplasm. The enzyme catalyses L-serine + acetyl-CoA = O-acetyl-L-serine + CoA. It participates in amino-acid biosynthesis; L-cysteine biosynthesis; L-cysteine from L-serine: step 1/2. With respect to regulation, feedback inhibitions by L-Ser and acetyl-CoA. The protein is Serine acetyltransferase 5 (SAT5) of Arabidopsis thaliana (Mouse-ear cress).